The sequence spans 361 residues: Cyclin-D3-3 (361 aa).

Belongs to the cyclin family. Cyclin D subfamily.

In terms of biological role, promotes divisions in the guard cells (GCs) after the guard mother cells (GMC) symmetric division. The sequence is that of Cyclin-D3-3 (CYCD3-3) from Arabidopsis thaliana (Mouse-ear cress).